A 465-amino-acid polypeptide reads, in one-letter code: FAD-dependent oxidoreductase pigF (465 aa).

The N-terminal stretch at 1–17 (MMLLTLLILSSVGLAAA) is a signal peptide. N-linked (GlcNAc...) asparagine glycosylation is found at N95, N138, N260, and N327. A lipid anchor (GPI-anchor amidated aspartate) is attached at D444. The propeptide at 445-465 (SASGIWNLTNAVVLPGLLTGL) is removed in mature form. Residue N451 is glycosylated (N-linked (GlcNAc...) asparagine).

It belongs to the beta-cyclopiazonate dehydrogenase family. It depends on FAD as a cofactor.

The protein localises to the cell membrane. It participates in secondary metabolite biosynthesis. Its function is as follows. FAD-dependent oxidoreductase; part of the gene cluster that mediates the biosynthesis of azaphilone pigments (MonAzPs), a complex mixture of compounds with a common azaphilone skeleton very widely used as food colorants. Within the pathway, pigF desaturates C6(7) to afford the orange and red pigments from yellow pigments. The first step of the pathway is performed by the nrPKS pigA that forms the hexaketide precursor from successive condensations of five malonyl-CoA units, with a simple acetyl-CoA starter unit. The role of esterase pigG is not clear, but it may play at most a supplementary role in the formation of the benzaldehyde produced by the pigA nrPKS. This very reactive benzaldehyde is intercepted by the pigC ketoreductase that to provide the first stable enzyme-free MonAzPs intermediate, 6-(4-hydroxy-2-oxopentyl)-3-methyl-2,4-dioxocyclohexane carbaldehyde, also known as M7PKS-1. The FAD-dependent monooxygenase pigN hydroxylates M7PKS-1 at C-4, which triggers the formation of the pyran ring. PigJ, pigK and pigD are involved in the acetylation of the pyran ring. PigJ and pigK form the two subunits of a dedicated fungal FAS that produces the side chain fatty acyl moiety of MonAzPs and pigD transfers the fatty acyl chain to the C-4 alcohol. PigM and pigO are involved in the elimination of the omega-1 alcohol. PigM acts as an O-acetyltransferase that synthesizes the putative O-11 acetyl intermediate whereas pigO eliminates acetic acid to yield an intermediate with a C10(11) double bond. The dehydration of the C-11 alcohol followed by the reduction of the C6(7) double bond by the NAD(P)H-dependent oxidoreductase pigE increases the electrophilicity of the C-5 ketone of the resulting acyl benzopyran. This in turn sets up the C-5 ketone for an intramolecular Knoevenagel aldol condensation with the C-20 enol of the side chain. This condensation affords the characteristic linear tricyclic carbon skeletons of the yellow pigments that serve as the common precursors for the classical yellow pigments monascin and ankaflavin, orange pigments rubopunctatin and monascorubrin, and red pigments ribropunctamine and monascorubramine. The FAD-dependent oxidoreductase pigF is especially invoved in the biosynthesis of orange and red pigments via desaturation of C6(7). In Monascus ruber (Mold), this protein is FAD-dependent oxidoreductase pigF.